A 504-amino-acid polypeptide reads, in one-letter code: Anaerobic nitric oxide reductase transcription regulator NorR (504 aa).

At Asp-57 the chain carries 4-aspartylphosphate. The Sigma-54 factor interaction domain occupies 187–416 (MIGLSPGMTQ…LEHAIHRAVV (230 aa)). Residues 215-222 (GETGTGKE) and 278-287 (ADNGTLFLDE) contribute to the ATP site. The segment at residues 479 to 498 (WAASARMLETDVANLHRLAK) is a DNA-binding region (H-T-H motif).

The protein operates within nitrogen metabolism; nitric oxide reduction. In terms of biological role, required for the expression of anaerobic nitric oxide (NO) reductase, acts as a transcriptional activator for at least the norVW operon. Activation also requires sigma-54. This Escherichia coli O7:K1 (strain IAI39 / ExPEC) protein is Anaerobic nitric oxide reductase transcription regulator NorR.